A 390-amino-acid chain; its full sequence is Endonuclease 8-like 1 (390 aa).

The active-site Schiff-base intermediate with DNA is the Pro-2. Glu-3 (proton donor) is an active-site residue. Lys-54 acts as the Proton donor; for beta-elimination activity in catalysis. Residue Asn-176 coordinates DNA. Residues Thr-278–Ser-390 are disordered. A compositionally biased stretch (basic residues) spans Lys-291–Lys-301. Residues Thr-335 to Gln-347 are compositionally biased toward polar residues. Arg-339 is a binding site for DNA. The Proton donor; for delta-elimination activity role is filled by Arg-339.

The protein belongs to the FPG family. In terms of tissue distribution, ubiquitous.

Its subcellular location is the cytoplasm. It localises to the cytoskeleton. The protein resides in the microtubule organizing center. The protein localises to the centrosome. It is found in the nucleus. Its subcellular location is the chromosome. It catalyses the reaction 2'-deoxyribonucleotide-(2'-deoxyribose 5'-phosphate)-2'-deoxyribonucleotide-DNA = a 3'-end 2'-deoxyribonucleotide-(2,3-dehydro-2,3-deoxyribose 5'-phosphate)-DNA + a 5'-end 5'-phospho-2'-deoxyribonucleoside-DNA + H(+). Its function is as follows. Involved in base excision repair of DNA damaged by oxidation or by mutagenic agents. Acts as a DNA glycosylase that recognizes and removes damaged bases. Has a preference for oxidized pyrimidines, such as thymine glycol, formamidopyrimidine (Fapy) and 5-hydroxyuracil. Has marginal activity towards 8-oxoguanine. Has AP (apurinic/apyrimidinic) lyase activity and introduces nicks in the DNA strand. Cleaves the DNA backbone by beta-delta elimination to generate a single-strand break at the site of the removed base with both 3'- and 5'-phosphates. Has DNA glycosylase/lyase activity towards mismatched uracil and thymine, in particular in U:C and T:C mismatches. Specifically binds 5-hydroxymethylcytosine (5hmC), suggesting that it acts as a specific reader of 5hmC. In Homo sapiens (Human), this protein is Endonuclease 8-like 1 (NEIL1).